Here is a 359-residue protein sequence, read N- to C-terminus: Peptide chain release factor 1 (359 aa).

Q236 carries the N5-methylglutamine modification.

This sequence belongs to the prokaryotic/mitochondrial release factor family. Methylated by PrmC. Methylation increases the termination efficiency of RF1.

Its subcellular location is the cytoplasm. In terms of biological role, peptide chain release factor 1 directs the termination of translation in response to the peptide chain termination codons UAG and UAA. The chain is Peptide chain release factor 1 from Lacticaseibacillus casei (strain BL23) (Lactobacillus casei).